The primary structure comprises 190 residues: Jupiter microtubule associated homolog 2 (190 aa).

The residue at position 1 (Met1) is an N-acetylmethionine. The tract at residues 1-190 (MFQVPDSEGG…PGGKSSISFY (190 aa)) is disordered. Ser30 is modified (phosphoserine). Thr35 carries the post-translational modification Phosphothreonine. Residues 35-44 (TPSSRPNRMA) show a composition bias toward polar residues. 3 positions are modified to phosphoserine: Ser45, Ser69, and Ser97. Over residues 110 to 129 (KPKDHVFLCEGEEPKSDLKA) the composition is skewed to basic and acidic residues. Phosphoserine occurs at positions 132 and 144. Residues 139-167 (PGEKGSARKAGPAKEQEPMPTVDSHEPRL) are compositionally biased toward basic and acidic residues.

The protein belongs to the JUPITER family. Monomer. Dimer. Interacts with TPCN1. In terms of tissue distribution, expressed in liver, kidney, prostate, testis and uterus.

Its subcellular location is the cytoplasm. It is found in the nucleus. Its function is as follows. Nicotinic acid adenine dinucleotide phosphate (NAADP) binding protein required for NAADP-evoked intracellular calcium release. Confers NAADP-sensitivity to the two pore channels (TPCs) complex. Enables NAADP to activate Ca(2+) release from the endoplasmic reticulum through ryanodine receptors. In terms of biological role, (Microbial infection) Involved in the endolysosomal trafficking of human coronavirus SARS-CoV-2. This Homo sapiens (Human) protein is Jupiter microtubule associated homolog 2.